A 350-amino-acid polypeptide reads, in one-letter code: Biotin synthase (350 aa).

One can recognise a Radical SAM core domain in the interval 41-268; the sequence is NEVQVSRLLS…KSRVRLSAGR (228 aa). Cys56, Cys60, and Cys63 together coordinate [4Fe-4S] cluster. The [2Fe-2S] cluster site is built by Cys100, Cys131, Cys191, and Arg263.

This sequence belongs to the radical SAM superfamily. Biotin synthase family. In terms of assembly, homodimer. Requires [4Fe-4S] cluster as cofactor. It depends on [2Fe-2S] cluster as a cofactor.

The enzyme catalyses (4R,5S)-dethiobiotin + (sulfur carrier)-SH + 2 reduced [2Fe-2S]-[ferredoxin] + 2 S-adenosyl-L-methionine = (sulfur carrier)-H + biotin + 2 5'-deoxyadenosine + 2 L-methionine + 2 oxidized [2Fe-2S]-[ferredoxin]. The protein operates within cofactor biosynthesis; biotin biosynthesis; biotin from 7,8-diaminononanoate: step 2/2. Catalyzes the conversion of dethiobiotin (DTB) to biotin by the insertion of a sulfur atom into dethiobiotin via a radical-based mechanism. This is Biotin synthase from Shewanella pealeana (strain ATCC 700345 / ANG-SQ1).